The chain runs to 200 residues: Oligoribonuclease (200 aa).

The 164-residue stretch at 20-183 folds into the Exonuclease domain; the sequence is LVWLDMEMTG…ADIHESIDEL (164 aa). Residue tyrosine 141 is part of the active site.

It belongs to the oligoribonuclease family.

The protein resides in the cytoplasm. Functionally, 3'-to-5' exoribonuclease specific for small oligoribonucleotides. This Burkholderia vietnamiensis (strain G4 / LMG 22486) (Burkholderia cepacia (strain R1808)) protein is Oligoribonuclease.